Here is a 493-residue protein sequence, read N- to C-terminus: Mitochondrial distribution and morphology protein 10 (493 aa).

The protein belongs to the MDM10 family. Component of the ER-mitochondria encounter structure (ERMES) or MDM complex, composed of MMM1, MDM10, MDM12 and MDM34. Associates with the mitochondrial outer membrane sorting assembly machinery SAM(core) complex, which consists of SAM35, SAM37 and SAM50, to form a SAM(holo) complex.

Its subcellular location is the mitochondrion outer membrane. Component of the ERMES/MDM complex, which serves as a molecular tether to connect the endoplasmic reticulum and mitochondria. Components of this complex are involved in the control of mitochondrial shape and protein biogenesis and may function in phospholipid exchange. MDM10 is involved in the late assembly steps of the general translocase of the mitochondrial outer membrane (TOM complex). Functions in the TOM40-specific route of the assembly of outer membrane beta-barrel proteins, including the association of TOM40 with the receptor TOM22 and small TOM proteins. Can associate with the SAM(core) complex as well as the MDM12-MMM1 complex, both involved in late steps of the major beta-barrel assembly pathway, that is responsible for biogenesis of all outer membrane beta-barrel proteins. May act as a switch that shuttles between both complexes and channels precursor proteins into the TOM40-specific pathway. Plays a role in mitochondrial morphology and in the inheritance of mitochondria. This chain is Mitochondrial distribution and morphology protein 10, found in Saccharomyces cerevisiae (strain RM11-1a) (Baker's yeast).